The primary structure comprises 523 residues: Solute carrier family 2, facilitated glucose transporter member 2 (523 aa).

Residues 1–10 (MSEDKITGTL) lie on the Cytoplasmic side of the membrane. The chain crosses the membrane as a helical span at residues 11–31 (AFTVFTAVLSSFQFGYDIGVI). At 32 to 97 (NAPQEVIISH…SAHIVTMLWS (66 aa)) the chain is on the extracellular side. A glycan (N-linked (GlcNAc...) asparagine) is linked at Asn62. The chain crosses the membrane as a helical span at residues 98-118 (LSVSSFAVGGMVASFFGGWLG). The Cytoplasmic portion of the chain corresponds to 119-126 (DKLGRIKA). A helical membrane pass occupies residues 127–147 (MLAANSLSLTGALLMGCSKFG). Topologically, residues 148-157 (PAHALIIAGR) are extracellular. A helical membrane pass occupies residues 158–178 (SVSGLYCGLISGLVPMYIGEI). The Cytoplasmic portion of the chain corresponds to 179-186 (APTTLRGA). A helical membrane pass occupies residues 187–207 (LGTLHQLALVTGILISQIAGL). Gln192 serves as a coordination point for D-glucose. At 208 to 216 (SFILGNQDH) the chain is on the extracellular side. A helical membrane pass occupies residues 217–237 (WHILLGLSAVPALLQCLLLLF). The Cytoplasmic segment spans residues 238–302 (CPESPRYLYI…LFTDANYRQP (65 aa)). Residues 303–323 (ILVALMLHMAQQFSGINGIFY) form a helical membrane-spanning segment. Residues 313–314 (QQ) and Asn319 contribute to the D-glucose site. The Extracellular segment spans residues 324–337 (YSTSIFQTAGISQP). Residues 338-358 (VYATIGVGAINMIFTAVSVLL) form a helical membrane-spanning segment. Asn348 provides a ligand contact to D-glucose. Over 359-367 (VEKAGRRTL) the chain is Cytoplasmic. The helical transmembrane segment at 368–388 (FLTGMIGMFFCTIFMSVGLVL) threads the bilayer. The Extracellular segment spans residues 389 to 401 (LDKFAWMSYVSMT). A helical membrane pass occupies residues 402 to 422 (AIFLFVSFFEIGPGPIPWFMV). Glu411 and Trp419 together coordinate D-glucose. The Cytoplasmic portion of the chain corresponds to 423-432 (AEFFSQGPRP). The chain crosses the membrane as a helical span at residues 433-453 (TALALAAFSNWVCNFVIALCF). Over 454-460 (QYIADFL) the chain is Extracellular. The chain crosses the membrane as a helical span at residues 461–481 (GPYVFFLFAGVVLVFTLFTFF). Topologically, residues 482–523 (KVPETKGKSFEEIAAEFRKKSGSAPPRKAAVQMEFLASSESV) are cytoplasmic. Phosphoserine is present on Ser522.

The protein belongs to the major facilitator superfamily. Sugar transporter (TC 2.A.1.1) family. Glucose transporter subfamily. In terms of processing, N-glycosylated; required for stability and retention at the cell surface of pancreatic beta cells. As to expression, in embryo, expressed in endoderm layer of yolk sac and liver primordium.

The protein localises to the cell membrane. It catalyses the reaction D-glucose(out) = D-glucose(in). The enzyme catalyses D-fructose(out) = D-fructose(in). The catalysed reaction is L-dehydroascorbate(out) = L-dehydroascorbate(in). It carries out the reaction D-galactose(in) = D-galactose(out). With respect to regulation, D-glucose and maltose competitively inhibit fructose transport. D-glucose, D-fructose and maltose inhibit deoxyglucose transport. Functionally, facilitative hexose transporter that mediates the transport of glucose, fructose and galactose. Likely mediates the bidirectional transfer of glucose across the plasma membrane of hepatocytes and is responsible for uptake of glucose by the beta cells; may comprise part of the glucose-sensing mechanism of the beta cell. May also participate with the Na(+)/glucose cotransporter in the transcellular transport of glucose in the small intestine and kidney. Also able to mediate the transport of dehydroascorbate. The sequence is that of Solute carrier family 2, facilitated glucose transporter member 2 from Mus musculus (Mouse).